We begin with the raw amino-acid sequence, 372 residues long: N-methyl-L-tryptophan oxidase (372 aa).

Residue 4-34 coordinates FAD; that stretch reads DLIIIGSGSVGAAAGYYATRAGLNVLMTDAH. Cys-308 carries the S-8alpha-FAD cysteine modification.

This sequence belongs to the MSOX/MTOX family. MTOX subfamily. As to quaternary structure, monomer. The cofactor is FAD.

The enzyme catalyses N(alpha)-methyl-L-tryptophan + O2 + H2O = L-tryptophan + formaldehyde + H2O2. Its function is as follows. Catalyzes the oxidative demethylation of N-methyl-L-tryptophan. This Shigella sonnei (strain Ss046) protein is N-methyl-L-tryptophan oxidase.